We begin with the raw amino-acid sequence, 234 residues long: NLP effector protein 1 (234 aa).

An N-terminal signal peptide occupies residues 1–18 (MQLRAFISVFASLACVNA). Residue Asn66 is glycosylated (N-linked (GlcNAc...) asparagine). The short motif at 102-112 (AFMYSWYMPKD) is the Conserved undecapeptide motif I element. The Hepta-peptide GHRHDWE motif II signature appears at 119-125 (GHRHDWE).

It belongs to the Necrosis inducing protein (NPP1) family.

It localises to the secreted. In terms of biological role, secreted effector that contributes to virulence during infection by P.capsici. Induces distinct chlorosis at 3 days after inoculation of host C.annuum leaves, and all the chlorotic areas gradually turn brown and become moderately necrotic at 7 days after inoculation. Leads only to chlorotic areas, without necrosis at 7 days after non-host N.benthamiana leaves infection. Induces cell death in hot pepper. This chain is NLP effector protein 1, found in Phytophthora capsici.